The sequence spans 417 residues: UDP-N-acetylmuramoylalanine--D-glutamate ligase (417 aa).

Position 101-107 (Gly-101–Ser-107) interacts with ATP.

The protein belongs to the MurCDEF family.

It localises to the cytoplasm. The catalysed reaction is UDP-N-acetyl-alpha-D-muramoyl-L-alanine + D-glutamate + ATP = UDP-N-acetyl-alpha-D-muramoyl-L-alanyl-D-glutamate + ADP + phosphate + H(+). It participates in cell wall biogenesis; peptidoglycan biosynthesis. Its function is as follows. Cell wall formation. Catalyzes the addition of glutamate to the nucleotide precursor UDP-N-acetylmuramoyl-L-alanine (UMA). The polypeptide is UDP-N-acetylmuramoylalanine--D-glutamate ligase (Thermus thermophilus (strain ATCC BAA-163 / DSM 7039 / HB27)).